The primary structure comprises 475 residues: Ribulose bisphosphate carboxylase large chain (475 aa).

The propeptide occupies 1 to 2 (MS). Proline 3 carries the post-translational modification N-acetylproline. Lysine 14 is modified (N6,N6,N6-trimethyllysine). Substrate-binding residues include asparagine 123 and threonine 173. Lysine 175 (proton acceptor) is an active-site residue. Lysine 177 contributes to the substrate binding site. Mg(2+)-binding residues include lysine 201, aspartate 203, and glutamate 204. Lysine 201 carries the N6-carboxylysine modification. The active-site Proton acceptor is histidine 294. Substrate-binding residues include arginine 295, histidine 327, and serine 379.

This sequence belongs to the RuBisCO large chain family. Type I subfamily. As to quaternary structure, heterohexadecamer of 8 large chains and 8 small chains; disulfide-linked. The disulfide link is formed within the large subunit homodimers. Requires Mg(2+) as cofactor. The disulfide bond which can form in the large chain dimeric partners within the hexadecamer appears to be associated with oxidative stress and protein turnover.

The protein localises to the plastid. The protein resides in the chloroplast. It carries out the reaction 2 (2R)-3-phosphoglycerate + 2 H(+) = D-ribulose 1,5-bisphosphate + CO2 + H2O. It catalyses the reaction D-ribulose 1,5-bisphosphate + O2 = 2-phosphoglycolate + (2R)-3-phosphoglycerate + 2 H(+). Functionally, ruBisCO catalyzes two reactions: the carboxylation of D-ribulose 1,5-bisphosphate, the primary event in carbon dioxide fixation, as well as the oxidative fragmentation of the pentose substrate in the photorespiration process. Both reactions occur simultaneously and in competition at the same active site. This Chara vulgaris (Common stonewort) protein is Ribulose bisphosphate carboxylase large chain.